The sequence spans 227 residues: Thymidylate kinase (227 aa).

Glycine 7–threonine 14 contributes to the ATP binding site.

It belongs to the thymidylate kinase family.

The catalysed reaction is dTMP + ATP = dTDP + ADP. Its function is as follows. Phosphorylation of dTMP to form dTDP in both de novo and salvage pathways of dTTP synthesis. This Desulforapulum autotrophicum (strain ATCC 43914 / DSM 3382 / VKM B-1955 / HRM2) (Desulfobacterium autotrophicum) protein is Thymidylate kinase.